A 338-amino-acid polypeptide reads, in one-letter code: Selenocysteine methyltransferase (338 aa).

The region spanning 1 to 327 is the Hcy-binding domain; sequence MSSPLITDFL…DTIRGIYKIL (327 aa). Cys245, Cys312, and Cys313 together coordinate Zn(2+).

In terms of assembly, monomer. It depends on Zn(2+) as a cofactor. Present in all tissues tested.

It carries out the reaction S-methyl-L-methionine + L-selenocysteine = Se-methyl-L-selenocysteine + L-methionine + H(+). Its function is as follows. Catalyzes the methylation of selenocysteine with S-methylmethionine as donor. Does not methylate cysteine. This Astragalus bisulcatus (Two-grooved milkvetch) protein is Selenocysteine methyltransferase (SMTA).